The sequence spans 734 residues: E3 ubiquitin-protein ligase TRIM56 (734 aa).

The RING-type zinc finger occupies 21–60 (CKICLEQLHTPKTLPCLHTYCQDCLAQLDIGGQVRCPECR). 2 B box-type zinc fingers span residues 98 to 149 (KPTC…VVDL) and 164 to 205 (RQAS…CLPL). Positions 169, 172, 192, and 197 each coordinate Zn(2+). A coiled-coil region spans residues 215–303 (GLEELLAGVD…KIERQEQVAK (89 aa)). Basic and acidic residues predominate over residues 372-381 (EPKQSPKDSG). Residues 372–463 (EPKQSPKDSG…SPILRPNLEG (92 aa)) are disordered. Residues 435–448 (RPNKKKKCKGRGKS) show a composition bias toward basic residues. At serine 454 the chain carries Phosphoserine.

This sequence belongs to the TRIM/RBCC family. As to quaternary structure, interacts with STING1. Interacts with TICAM1.

Its subcellular location is the cytoplasm. It catalyses the reaction S-ubiquitinyl-[E2 ubiquitin-conjugating enzyme]-L-cysteine + [acceptor protein]-L-lysine = [E2 ubiquitin-conjugating enzyme]-L-cysteine + N(6)-ubiquitinyl-[acceptor protein]-L-lysine.. The protein operates within protein modification; protein ubiquitination. E3 ubiquitin-protein ligase that plays a key role in innate antiviral immunity by mediating ubiquitination of CGAS and STING1. In response to pathogen- and host-derived double-stranded DNA (dsDNA), targets STING1 to 'Lys-63'-linked ubiquitination, thereby promoting its homodimerization, a step required for the production of type I interferon IFN-beta. Also mediates monoubiquitination of CGAS, thereby promoting CGAS oligomerization and subsequent activation. Independently of its E3 ubiquitin ligase activity, positive regulator of TLR3 signaling. Potentiates extracellular double stranded RNA (dsRNA)-induced expression of IFNB1 and interferon-stimulated genes ISG15, IFIT1/ISG56, CXCL10, OASL and CCL5/RANTES. The polypeptide is E3 ubiquitin-protein ligase TRIM56 (Mus musculus (Mouse)).